The sequence spans 494 residues: Rho GTPase-activating protein 19 (494 aa).

A2 is subject to N-acetylalanine. A phosphoserine mark is found at S7 and S31. The region spanning 102-308 (MSLKRKEKGV…FMIKHSQKLF (207 aa)) is the Rho-GAP domain. 2 disordered regions span residues 349-368 (KSQK…TQHH) and 399-421 (QSLT…ARSR). A compositionally biased stretch (basic and acidic residues) spans 354 to 368 (NRVDSCPHQEETQHH). Polar residues predominate over residues 399–415 (QSLTQTPGREPSTSQVQ). Phosphoserine is present on residues S422, S438, and S470. At T478 the chain carries Phosphothreonine.

As to expression, strong expression in fetal heart, brain, placenta, lung, liver, skeletal muscle, kidney and pancreas. Weak expression in adult pancreas, spleen, thymus, and ovary.

The protein resides in the nucleus. In terms of biological role, GTPase activator for the Rho-type GTPases by converting them to an inactive GDP-bound state. The chain is Rho GTPase-activating protein 19 (ARHGAP19) from Homo sapiens (Human).